The primary structure comprises 795 residues: Mitochondrial inner membrane m-AAA protease component paraplegin (795 aa).

Residues 1–43 (MAVLLLLLRALRRGPGPGPRPLWGPGPAWSPGFPARPGRGRPY) constitute a mitochondrion transit peptide. The propeptide at 44–105 (MASRPPGDLA…GGTFYFNTSR (62 aa)) is removed in mature form. At 106–144 (LKQKNKEKDKSKGKAPEEDEEERRRRERDDQMYRERLRT) the chain is on the mitochondrial matrix side. Positions 108-133 (QKNKEKDKSKGKAPEEDEEERRRRER) are disordered. A compositionally biased stretch (basic and acidic residues) spans 109–133 (KNKEKDKSKGKAPEEDEEERRRRER). Residues 145 to 165 (LLVIAVVMSLLNALSTSGGSI) traverse the membrane as a helical segment. At 166–248 (SWNDFVHEML…DRIPVSYKRT (83 aa)) the chain is on the mitochondrial intermembrane side. A helical transmembrane segment spans residues 249 to 269 (GFFGNALYSVGMTAVGLAILW). Residues 270-795 (YVFRLAGMTG…LGGEEPTWPK (526 aa)) are Mitochondrial matrix-facing. ATP is bound by residues Ala-312, Gly-352, Cys-353, Gly-354, Lys-355, Thr-356, and Leu-357. Tyr-505 carries the post-translational modification 3'-nitrotyrosine. His-574 is a Zn(2+) binding site. The active site involves Glu-575. Residues His-578 and Asp-650 each contribute to the Zn(2+) site. The segment at 701–795 (HEARLLVAKA…LGGEEPTWPK (95 aa)) is interaction with PPIF. A disordered region spans residues 751 to 795 (PHGPKKMIAPQRWIDAQREKQDLGEEETEETQQPPLGGEEPTWPK).

It in the N-terminal section; belongs to the AAA ATPase family. The protein in the C-terminal section; belongs to the peptidase M41 family. As to quaternary structure, forms heterooligomers with AFG3L2; the m-AAA protease is composed of heterohexamers of AFG3L2 and SPG7. Component of the mitochondrial permeability transition pore complex (mPTPC), at least composed of SPG7, VDAC1 and PPIF. Interacts with MAIP1. The cofactor is Zn(2+). In terms of processing, upon import into the mitochondrion, the N-terminal transit peptide is cleaved by the mitochondrial-processing peptidase (MPP) to generate an intermediate form which undergoes a second proteolytic cleavage mediated by proteases AFG3L2 removing an additional N-terminal fragment to generate the proteolytically active mature form. In terms of tissue distribution, ubiquitous.

The protein localises to the mitochondrion inner membrane. It catalyses the reaction ATP + H2O = ADP + phosphate + H(+). In terms of biological role, catalytic component of the m-AAA protease, a protease that plays a key role in proteostasis of inner mitochondrial membrane proteins, and which is essential for axonal and neuron development. SPG7 possesses both ATPase and protease activities: the ATPase activity is required to unfold substrates, threading them into the internal proteolytic cavity for hydrolysis into small peptide fragments. The m-AAA protease exerts a dual role in the mitochondrial inner membrane: it mediates the processing of specific regulatory proteins and ensures protein quality control by degrading misfolded polypeptides. Mediates protein maturation of the mitochondrial ribosomal subunit MRPL32/bL32m by catalyzing the cleavage of the presequence of MRPL32/bL32m prior to assembly into the mitochondrial ribosome. Acts as a regulator of calcium in neurons by mediating degradation of SMDT1/EMRE before its assembly with the uniporter complex, limiting the availability of SMDT1/EMRE for MCU assembly and promoting efficient assembly of gatekeeper subunits with MCU. Also regulates mitochondrial calcium by catalyzing degradation of MCU. Plays a role in the formation and regulation of the mitochondrial permeability transition pore (mPTP) and its proteolytic activity is dispensable for this function. The polypeptide is Mitochondrial inner membrane m-AAA protease component paraplegin (Homo sapiens (Human)).